Here is a 296-residue protein sequence, read N- to C-terminus: Elongation factor Ts (296 aa).

The interval 82–85 (TDFV) is involved in Mg(2+) ion dislocation from EF-Tu.

The protein belongs to the EF-Ts family.

The protein resides in the cytoplasm. Its function is as follows. Associates with the EF-Tu.GDP complex and induces the exchange of GDP to GTP. It remains bound to the aminoacyl-tRNA.EF-Tu.GTP complex up to the GTP hydrolysis stage on the ribosome. This is Elongation factor Ts from Coxiella burnetii (strain CbuG_Q212) (Coxiella burnetii (strain Q212)).